We begin with the raw amino-acid sequence, 444 residues long: uncharacterized protein (444 aa).

The region spanning Met1–Lys69 is the HTH gntR-type domain. The H-T-H motif DNA-binding region spans Ile29–Gln48. Lys286 carries the N6-(pyridoxal phosphate)lysine modification.

It in the C-terminal section; belongs to the class-I pyridoxal-phosphate-dependent aminotransferase family. Requires pyridoxal 5'-phosphate as cofactor.

This is an uncharacterized protein from Bacillus subtilis (strain 168).